Reading from the N-terminus, the 100-residue chain is Urease subunit gamma (100 aa).

Belongs to the urease gamma subunit family. In terms of assembly, heterotrimer of UreA (gamma), UreB (beta) and UreC (alpha) subunits. Three heterotrimers associate to form the active enzyme.

It is found in the cytoplasm. The catalysed reaction is urea + 2 H2O + H(+) = hydrogencarbonate + 2 NH4(+). It functions in the pathway nitrogen metabolism; urea degradation; CO(2) and NH(3) from urea (urease route): step 1/1. The sequence is that of Urease subunit gamma from Prochlorococcus marinus (strain MIT 9215).